The chain runs to 291 residues: Small ribosomal subunit biogenesis GTPase RsgA 1 (291 aa).

The region spanning 63 to 221 (ENALVRPPVA…VADTPGFSSI (159 aa)) is the CP-type G domain. GTP contacts are provided by residues 112 to 115 (SKMD) and 164 to 172 (GQSGVGKST). Residues Cys-245, Cys-250, His-252, and Cys-258 each contribute to the Zn(2+) site.

This sequence belongs to the TRAFAC class YlqF/YawG GTPase family. RsgA subfamily. As to quaternary structure, monomer. Associates with 30S ribosomal subunit, binds 16S rRNA. It depends on Zn(2+) as a cofactor.

The protein resides in the cytoplasm. One of several proteins that assist in the late maturation steps of the functional core of the 30S ribosomal subunit. Helps release RbfA from mature subunits. May play a role in the assembly of ribosomal proteins into the subunit. Circularly permuted GTPase that catalyzes slow GTP hydrolysis, GTPase activity is stimulated by the 30S ribosomal subunit. This is Small ribosomal subunit biogenesis GTPase RsgA 1 from Listeria monocytogenes serotype 4b (strain F2365).